The sequence spans 555 residues: Oxamate carbamoyltransferase subunit AllF (555 aa).

It belongs to the AllF family. The OXTCase is composed of 3 subunits, AllF, AllG and AllH. The cofactor is Mg(2+).

It catalyses the reaction oxamate + carbamoyl phosphate = N-carbamoyl-2-oxoglycine + phosphate. It participates in nitrogen metabolism; (S)-allantoin degradation. Component of a carbamoyltransferase involved in the anaerobic nitrogen utilization via the assimilation of allantoin. Catalyzes the conversion of oxalurate (N-carbamoyl-2-oxoglycine) to oxamate and carbamoyl phosphate. This chain is Oxamate carbamoyltransferase subunit AllF, found in Escherichia coli (strain K12).